An 837-amino-acid polypeptide reads, in one-letter code: Semaphorin-4B (837 aa).

The signal sequence occupies residues methionine 1–alanine 43. Over leucine 44–glutamate 717 the chain is Extracellular. The 477-residue stretch at arginine 47 to methionine 523 folds into the Sema domain. Residues asparagine 69 and asparagine 96 are each glycosylated (N-linked (GlcNAc...) asparagine). Cystine bridges form between cysteine 120–cysteine 131 and cysteine 149–cysteine 158. Asparagine 165 carries N-linked (GlcNAc...) asparagine glycosylation. 2 disulfide bridges follow: cysteine 286/cysteine 399 and cysteine 310/cysteine 359. Asparagine 410 and asparagine 525 each carry an N-linked (GlcNAc...) asparagine glycan. One can recognise a PSI domain in the interval asparagine 525–serine 579. 2 cysteine pairs are disulfide-bonded: cysteine 526–cysteine 543 and cysteine 611–cysteine 656. The Ig-like C2-type domain maps to asparagine 604–phenylalanine 663. Residue asparagine 630 is glycosylated (N-linked (GlcNAc...) asparagine). The chain crosses the membrane as a helical span at residues phenylalanine 718 to tyrosine 738. Residues arginine 739–valine 837 are Cytoplasmic-facing. Residues proline 767–lysine 805 form a disordered region. 3 positions are modified to phosphoserine: serine 793, serine 818, and serine 830.

It belongs to the semaphorin family.

The protein resides in the membrane. In terms of biological role, inhibits axonal extension by providing local signals to specify territories inaccessible for growing axons. This is Semaphorin-4B from Homo sapiens (Human).